A 213-amino-acid chain; its full sequence is Protein-L-isoaspartate O-methyltransferase (213 aa).

Ser-64 is an active-site residue.

It belongs to the methyltransferase superfamily. L-isoaspartyl/D-aspartyl protein methyltransferase family.

The protein localises to the cytoplasm. The catalysed reaction is [protein]-L-isoaspartate + S-adenosyl-L-methionine = [protein]-L-isoaspartate alpha-methyl ester + S-adenosyl-L-homocysteine. Functionally, catalyzes the methyl esterification of L-isoaspartyl residues in peptides and proteins that result from spontaneous decomposition of normal L-aspartyl and L-asparaginyl residues. It plays a role in the repair and/or degradation of damaged proteins. The polypeptide is Protein-L-isoaspartate O-methyltransferase (Flavobacterium johnsoniae (strain ATCC 17061 / DSM 2064 / JCM 8514 / BCRC 14874 / CCUG 350202 / NBRC 14942 / NCIMB 11054 / UW101) (Cytophaga johnsonae)).